The chain runs to 203 residues: Probable cytochrome c oxidase subunit 3 (203 aa).

Helical transmembrane passes span Ile-30–Ala-50, Leu-69–Phe-89, Trp-102–Tyr-122, Ile-142–Leu-162, and Ile-179–Ile-199.

This sequence belongs to the cytochrome c oxidase subunit 3 family.

It localises to the cell membrane. The enzyme catalyses 4 Fe(II)-[cytochrome c] + O2 + 8 H(+)(in) = 4 Fe(III)-[cytochrome c] + 2 H2O + 4 H(+)(out). This Nocardia farcinica (strain IFM 10152) protein is Probable cytochrome c oxidase subunit 3 (ctaE).